We begin with the raw amino-acid sequence, 449 residues long: D-inositol 3-phosphate glycosyltransferase (449 aa).

Histidine 43 is a binding site for 1D-myo-inositol 3-phosphate. UDP-N-acetyl-alpha-D-glucosamine is bound by residues 49–50 and glycine 57; that span reads QP. Residues 54 to 59, lysine 112, tyrosine 145, threonine 169, and arginine 189 each bind 1D-myo-inositol 3-phosphate; that span reads DAGGMN. UDP-N-acetyl-alpha-D-glucosamine is bound by residues arginine 263, lysine 268, and glutamine 324. Tyrosine 333, arginine 334, and alanine 336 together coordinate Mg(2+). UDP-N-acetyl-alpha-D-glucosamine contacts are provided by glutamate 346 and glutamate 354. Threonine 360 is a Mg(2+) binding site.

Belongs to the glycosyltransferase group 1 family. MshA subfamily. In terms of assembly, homodimer.

The enzyme catalyses 1D-myo-inositol 3-phosphate + UDP-N-acetyl-alpha-D-glucosamine = 1D-myo-inositol 2-acetamido-2-deoxy-alpha-D-glucopyranoside 3-phosphate + UDP + H(+). Functionally, catalyzes the transfer of a N-acetyl-glucosamine moiety to 1D-myo-inositol 3-phosphate to produce 1D-myo-inositol 2-acetamido-2-deoxy-glucopyranoside 3-phosphate in the mycothiol biosynthesis pathway. The protein is D-inositol 3-phosphate glycosyltransferase of Segniliparus rotundus (strain ATCC BAA-972 / CDC 1076 / CIP 108378 / DSM 44985 / JCM 13578).